Consider the following 285-residue polypeptide: Acetylglutamate kinase (285 aa).

Substrate is bound by residues 64 to 65 (GG), arginine 86, and asparagine 180.

This sequence belongs to the acetylglutamate kinase family. ArgB subfamily.

The protein localises to the plastid. The protein resides in the chloroplast. It carries out the reaction N-acetyl-L-glutamate + ATP = N-acetyl-L-glutamyl 5-phosphate + ADP. Its pathway is amino-acid biosynthesis; L-arginine biosynthesis; N(2)-acetyl-L-ornithine from L-glutamate: step 2/4. Functionally, catalyzes the ATP-dependent phosphorylation of N-acetyl-L-glutamate. The sequence is that of Acetylglutamate kinase from Gracilaria tenuistipitata var. liui (Red alga).